The following is a 196-amino-acid chain: Large ribosomal subunit protein bL25 (196 aa).

It belongs to the bacterial ribosomal protein bL25 family. CTC subfamily. Part of the 50S ribosomal subunit; part of the 5S rRNA/L5/L18/L25 subcomplex. Contacts the 5S rRNA. Binds to the 5S rRNA independently of L5 and L18.

Functionally, this is one of the proteins that binds to the 5S RNA in the ribosome where it forms part of the central protuberance. In Geotalea daltonii (strain DSM 22248 / JCM 15807 / FRC-32) (Geobacter daltonii), this protein is Large ribosomal subunit protein bL25.